The following is a 430-amino-acid chain: Dihydrolipoyllysine-residue acetyltransferase component of pyruvate dehydrogenase complex (430 aa).

The region spanning 2–77 is the Lipoyl-binding domain; sequence AFEFRLPDIG…VVGDVIVKID (76 aa). Lysine 43 is modified (N6-lipoyllysine). Residues 80–122 form a disordered region; sequence DAEDMQFKGHDDDSSSKEEPAKEEAPAEQAPVATQTEEVDENR. Residues 84 to 104 are compositionally biased toward basic and acidic residues; sequence MQFKGHDDDSSSKEEPAKEEA. The Peripheral subunit-binding (PSBD) domain occupies 125 to 162; it reads KAMPSVRKYAREKGVNIKAVSGSGKNGRITKEDVDAYL. The tract at residues 165–199 is disordered; sequence GAPTASNESAASATNEEVAETPAAPAAVSLEGDFP. The span at 168 to 192 shows a compositional bias: low complexity; sequence TASNESAASATNEEVAETPAAPAAV. The active site involves histidine 401.

This sequence belongs to the 2-oxoacid dehydrogenase family. As to quaternary structure, forms a 24-polypeptide structural core with octahedral symmetry. Requires (R)-lipoate as cofactor.

It carries out the reaction N(6)-[(R)-dihydrolipoyl]-L-lysyl-[protein] + acetyl-CoA = N(6)-[(R)-S(8)-acetyldihydrolipoyl]-L-lysyl-[protein] + CoA. Its function is as follows. The pyruvate dehydrogenase complex catalyzes the overall conversion of pyruvate to acetyl-CoA and CO(2). It contains multiple copies of three enzymatic components: pyruvate dehydrogenase (E1), dihydrolipoamide acetyltransferase (E2) and lipoamide dehydrogenase (E3). The sequence is that of Dihydrolipoyllysine-residue acetyltransferase component of pyruvate dehydrogenase complex (pdhC) from Staphylococcus aureus (strain MRSA252).